The chain runs to 213 residues: High frequency lysogenization protein HflD homolog (213 aa).

A coiled-coil region spans residues 79–126; sequence QGLNAELTRYTLSLMVLERKLSSAKGALDTLGNRINGLQRQLEHFDLQ.

This sequence belongs to the HflD family.

It is found in the cytoplasm. The protein resides in the cell inner membrane. The chain is High frequency lysogenization protein HflD homolog from Shigella flexneri serotype 5b (strain 8401).